A 287-amino-acid chain; its full sequence is Small ribosomal subunit biogenesis GTPase RsgA (287 aa).

The CP-type G domain occupies 61-218 (ISQLKRPAVA…MVDTPGFSSL (158 aa)). Residues 110-113 (NKLD) and 161-169 (GPSGVGKST) each bind GTP. Residues Cys-242, Cys-247, His-249, and Cys-255 each contribute to the Zn(2+) site.

Belongs to the TRAFAC class YlqF/YawG GTPase family. RsgA subfamily. Monomer. Associates with 30S ribosomal subunit, binds 16S rRNA. The cofactor is Zn(2+).

The protein localises to the cytoplasm. Functionally, one of several proteins that assist in the late maturation steps of the functional core of the 30S ribosomal subunit. Helps release RbfA from mature subunits. May play a role in the assembly of ribosomal proteins into the subunit. Circularly permuted GTPase that catalyzes slow GTP hydrolysis, GTPase activity is stimulated by the 30S ribosomal subunit. This is Small ribosomal subunit biogenesis GTPase RsgA from Clostridium kluyveri (strain NBRC 12016).